Here is a 179-residue protein sequence, read N- to C-terminus: Probable inosine/xanthosine triphosphatase (179 aa).

Residue 13 to 18 (STNPVK) participates in substrate binding. Glutamine 70 is a Mg(2+) binding site.

This sequence belongs to the YjjX NTPase family. In terms of assembly, homodimer. Mg(2+) serves as cofactor. The cofactor is Mn(2+).

The catalysed reaction is XTP + H2O = XDP + phosphate + H(+). The enzyme catalyses ITP + H2O = IDP + phosphate + H(+). Phosphatase that hydrolyzes non-canonical purine nucleotides such as XTP and ITP to their respective diphosphate derivatives. Probably excludes non-canonical purines from DNA/RNA precursor pool, thus preventing their incorporation into DNA/RNA and avoiding chromosomal lesions. In Methanocaldococcus jannaschii (strain ATCC 43067 / DSM 2661 / JAL-1 / JCM 10045 / NBRC 100440) (Methanococcus jannaschii), this protein is Probable inosine/xanthosine triphosphatase.